A 764-amino-acid chain; its full sequence is Protein Lines homolog 1 (764 aa).

2 disordered regions span residues 615–668 (SQSQ…TSLC) and 682–702 (WEEQ…SSPF). The span at 645-654 (DSSEASEEET) shows a compositional bias: acidic residues. Phosphoserine is present on Ser-650. The segment covering 658–668 (HLANSKQTSLC) has biased composition (polar residues). The segment covering 691 to 702 (EPLLSAESSSPF) has biased composition (low complexity).

It belongs to the protein lines family.

This Mus musculus (Mouse) protein is Protein Lines homolog 1.